The sequence spans 541 residues: Zingiberene synthase (541 aa).

Mg(2+)-binding residues include Asp295, Asp299, Asn439, Ser443, and Glu447. A DDXXD motif motif is present at residues 295–299 (DDIID).

The protein belongs to the terpene synthase family. It depends on Mg(2+) as a cofactor. Requires Mn(2+) as cofactor.

It localises to the cytoplasm. The enzyme catalyses (2E,6E)-farnesyl diphosphate = alpha-zingiberene + diphosphate. Its pathway is secondary metabolite biosynthesis; terpenoid biosynthesis. Its function is as follows. Sesquiterpene synthase converting farnesyl diphosphate into two major products, zingiberene &gt; beta-sesquiphellandrene, and five minor products, 7-epi-sesquithujene, sesquisabinene A, (E)-alpha-bergamotene, (E)-beta-farnesene and beta-bisabolene. Can also accept geranyl diphosphate as substrate, producing nine monoterpenes, with myrcene, limonene and alpha-terpinolene as the major products. This Sorghum bicolor (Sorghum) protein is Zingiberene synthase (TPS1).